Here is an 833-residue protein sequence, read N- to C-terminus: Serine-rich coiled-coil domain-containing protein 2 (833 aa).

Residues 178-208 (NRSSGNVQKPRVNSCASRSSSGESLAQSPDN) are disordered. Residues 191 to 208 (SCASRSSSGESLAQSPDN) are compositionally biased toward polar residues. The residue at position 222 (Ser222) is a Phosphoserine. Disordered regions lie at residues 321-345 (LLKS…PADM), 424-452 (NRTR…FDSP), 478-508 (KHTS…SSDG), and 602-631 (DHYH…ESPL). Residue Ser451 is modified to Phosphoserine. Over residues 496–506 (SSFELSPSDSS) the composition is skewed to low complexity. Positions 606 to 615 (LSHPGHYHHH) are enriched in basic residues. A coiled-coil region spans residues 711–747 (DQIYKNEDLLNEITQLKEEIKKKDEKIQLLEQQLATR). Positions 789-833 (FQGMPRTVPPHRRQTSSTTAFQQPSQIYRPRPGKTNKATTYRGPQ) are disordered. Residues 803–814 (TSSTTAFQQPSQ) are compositionally biased toward polar residues.

This sequence belongs to the CCSER family. In terms of tissue distribution, expressed in brain (at protein level).

The protein localises to the cytoplasm. The protein resides in the cytoskeleton. Microtubule-binding protein which might play a role in microtubule bundling. The sequence is that of Serine-rich coiled-coil domain-containing protein 2 (Ccser2) from Mus musculus (Mouse).